The primary structure comprises 290 residues: Short chain dehydrogenase/reductase nsrO (290 aa).

Ile37 and Lys149 together coordinate NADP(+). Active-site proton donor residues include Ser168 and Tyr182. Residues Tyr182, Lys186, and Thr221 each contribute to the NADP(+) site. Lys186 (lowers pKa of active site Tyr) is an active-site residue.

This sequence belongs to the short-chain dehydrogenases/reductases (SDR) family.

It participates in secondary metabolite biosynthesis. Its function is as follows. Short chain dehydrogenase/reductase; part of the gene cluster that mediates the biosynthesis of the tetrahydroxanthone dimer neosartorin, which exhibits antibacterial activity. The two different monomeric units appear to be synthesized by the same set of enzymes, among which the Baeyer-Villiger monooxygenase nsrF is the key enzyme for the divergence of the biosynthetic routes. The pathway begins with the synthesis of atrochrysone thioester by the polyketide synthase nsrB. The atrochrysone carboxyl ACP thioesterase nsrC then breaks the thioester bond and releases the atrochrysone carboxylic acid from AacuL. Atrochrysone carboxylic acid is decarboxylated by the decarboxylase nsrE, and oxidized by the anthrone oxygenase nsrD to yield emodin. Emodin is then reduced to emodin hydroquinone by the oxidoreductase nsrR. A-ring reduction by the short chain dehydrogenase nsrJ, dehydration by the scytalone dehydratase-like protein nsrI and probable spontaneous re-oxidation, results in overall deoxygenation to chrysophanol. The Baeyer-Villiger monooxygenase nsrF accepts chrysophanol as a substrate to insert one oxygen atom at two different positions to yield the precursors of both monomric units. NsrF is promiscuous/flexible in interacting with the 2 (non methylated and methylated) aromatic rings of chrysophanol, thus diverging the biosynthetic pathway at this point. After the hydrolysis of the lactones, methylesterification by the methyltransferase nsrG yields respectively moniliphenone and 2,2',6'-trihydroxy-4-methyl-6-methoxya-cyldiphenylmethanone. The next steps are the hydroxylation by the FAD-dependent monooxygenase nsrK, followed by isomerization by the monooxygenase nsrQ. The short chain dehydrogenase/reductase nsrO then catalyzes the C-5 ketoreduction to give the xanthone skeleton of blennolide C and 5-acetylblennolide A. The acetyltransferase nsrL has a strict substrate specificity and uses only blennolide A but not blennolide C to yield 5-acetylblennolide A as the single-acetylated product. In the final step of the biosynthesis, the heterodimerization of the 2 xanthones, blennolide C and 5-acetylblennolide A, is catalyzed by the cytochrome P450 monooxygenase nsrP. NsrP can utilize at least three different xanthones as its substrates to perform the dimerization reaction. This is Short chain dehydrogenase/reductase nsrO from Aspergillus novofumigatus (strain IBT 16806).